The chain runs to 716 residues: Ciliary WD repeat-containing protein ctxp80 (716 aa).

The tract at residues 1-53 (MGCGGSSGASDPSSEKINWNNAEIHDEFKQEQKKAGAKRKAFDKTTGKAVEKE) is disordered. Positions 8 to 21 (GASDPSSEKINWNN) are enriched in polar residues. Positions 23–53 (EIHDEFKQEQKKAGAKRKAFDKTTGKAVEKE) are enriched in basic and acidic residues. 10 WD repeats span residues 167 to 208 (YHTN…KKGR), 213 to 254 (KGGR…QVKK), 257 to 297 (SGPD…FKKK), 305 to 343 (GKPT…STYD), 345 to 382 (HGKG…AEKT), 424 to 462 (HSDG…STAL), 529 to 568 (DSGE…KLGT), 571 to 610 (AHNS…QDPS), 639 to 678 (TDGT…GATP), and 683 to 715 (GHSE…QWKK).

Belongs to the WD repeat EMAP family.

The protein is Ciliary WD repeat-containing protein ctxp80 of Euplotoides octocarinatus (Freshwater ciliate).